Here is a 522-residue protein sequence, read N- to C-terminus: Tryptophan 2-halogenase (522 aa).

Residues Ala-17, Glu-36, Arg-42, His-44, Ile-45, Ser-48, Arg-103, Ile-127, and Asp-296 each coordinate FAD. 2 residues coordinate chloride: Ser-307 and Gly-308. Val-309 provides a ligand contact to FAD.

Belongs to the flavin-dependent halogenase family.

Its function is as follows. Involved in the incorporation of a chlorinated tryptophan residue into halogenated forms of the secondary metabolites called chondramides. In Chondromyces crocatus, this protein is Tryptophan 2-halogenase.